The following is a 43-amino-acid chain: U5-hexatoxin-Mr1a (43 aa).

4 disulfides stabilise this stretch: Cys1–Cys16, Cys8–Cys21, Cys15–Cys36, and Cys17–Cys43.

This sequence belongs to the neurotoxin 35 family. In terms of processing, contains 4 disulfide bonds. As to expression, expressed by the venom gland.

The protein localises to the secreted. In terms of biological role, this toxin blocks the neuromuscular transmission, and also acts on muscle. It exerts an effect of first exciting and then inhibiting the contraction of muscle. This toxin is active only against mammals. The polypeptide is U5-hexatoxin-Mr1a (Macrothele raveni (Funnel-web spider)).